A 316-amino-acid chain; its full sequence is NADH-quinone oxidoreductase subunit H (316 aa).

Transmembrane regions (helical) follow at residues 6–26 (PAVV…LIWV), 74–94 (FVIA…VVPF), 98–118 (VGVI…SLAV), 145–165 (ISYE…AGSF), 177–197 (GWYV…AVAE), 233–253 (YLGI…GWLG), 256–276 (FLPP…FFIL), and 296–316 (VMLP…LSVP).

Belongs to the complex I subunit 1 family. In terms of assembly, NDH-1 is composed of 14 different subunits. Subunits NuoA, H, J, K, L, M, N constitute the membrane sector of the complex.

It localises to the cell inner membrane. The enzyme catalyses a quinone + NADH + 5 H(+)(in) = a quinol + NAD(+) + 4 H(+)(out). In terms of biological role, NDH-1 shuttles electrons from NADH, via FMN and iron-sulfur (Fe-S) centers, to quinones in the respiratory chain. The immediate electron acceptor for the enzyme in this species is believed to be ubiquinone. Couples the redox reaction to proton translocation (for every two electrons transferred, four hydrogen ions are translocated across the cytoplasmic membrane), and thus conserves the redox energy in a proton gradient. This subunit may bind ubiquinone. This Methylococcus capsulatus (strain ATCC 33009 / NCIMB 11132 / Bath) protein is NADH-quinone oxidoreductase subunit H.